Here is a 152-residue protein sequence, read N- to C-terminus: MKLIASNKKAYFDYEILETLEAGLVLLGSEVKALRQTRVNLKDNFVKIIKGEAFLFGVHISYLDTIHAYYKPNERRERKLLLHKKQLLKWQIEASKERLSIVGLKLYFNQRNRAKIQIALVKGKKLHDKRQNLKEKALNKEILADLKHHFKG.

It belongs to the SmpB family.

It is found in the cytoplasm. Functionally, required for rescue of stalled ribosomes mediated by trans-translation. Binds to transfer-messenger RNA (tmRNA), required for stable association of tmRNA with ribosomes. tmRNA and SmpB together mimic tRNA shape, replacing the anticodon stem-loop with SmpB. tmRNA is encoded by the ssrA gene; the 2 termini fold to resemble tRNA(Ala) and it encodes a 'tag peptide', a short internal open reading frame. During trans-translation Ala-aminoacylated tmRNA acts like a tRNA, entering the A-site of stalled ribosomes, displacing the stalled mRNA. The ribosome then switches to translate the ORF on the tmRNA; the nascent peptide is terminated with the 'tag peptide' encoded by the tmRNA and targeted for degradation. The ribosome is freed to recommence translation, which seems to be the essential function of trans-translation. This chain is SsrA-binding protein, found in Helicobacter acinonychis (strain Sheeba).